The chain runs to 964 residues: MLWQRLAVVEWAALAWELLGASVLFIAVRWLVRRLEKRPRDLNRCGTLSSPPSASEAVAAQPGEVTMDAMMARLKLLNPDDLRKEVMKAGLKCGPITSTTRFIFEKKLAQALLEQGGLLTSSLPKPSAVTAMAFIQGTSRTPPSVDGKQTQQACFSEDRDFGYSVGLNPPEEEAVASSVHPVPFSASTRNDNHKAGVTAPKEPLVYYGVCPVYEDGPVRHERIHVYEDKKEALQAAKLIKGSRFKAFRTREDAEKFARGICDYLPSPNKTTPLLSPVKAVPLGGSDGLKADGLCLAESETVNKERANSYKNPRTQDLTAKLRKAVENGEEHTFSDLIWSNPRYLIGSGDNPTIVQEGCRYNVMHVAAKENQASMCQLTLETLENPEFMRLMYPDDNMDMLQKRILYVVDLYLNTPDKVGFDTPLHFACKFGNVDVVNVLSSHPLIVKNRKNKYGKTPEEVICERSQNKSPALKERIREYLMGHYYVPLLRAEDTSPVIGELWSSDQKAEASNTAHCRSSPRDPVMTLRAFVGPLSPSKAEDFRKLWKTPPRKKAGFFHSIRKSDPERGIERVGRELAHELGYPWVEYWEFLGCFVDLSSQEGLQRLEEYLIQKELSKKAQQEIRENEGCLQDRTSDFGSGKKYSNSISVGAFLDGDDDSSLEEIKNQQNTVPSQSQPTTDKFQTSKSGSLPLGQKVDPGETSVGTYPDKGRNGFCHPLNHRTADGRGLEATNGEEALPPPVSVLTQELNKLNLQSLGDSLHETPDKNGKLEDEVLPSRKGAADSDLLASPPAIASLGKKQVRTNTEVSEAMAEMSLGPKSPQLGVQAGLEPILSSATVDSTKRLFLSGEEPSKLDRDVLAALECANIDPGLYPAIHRWKSTVMCYSPSDRQSWPSPALKGKFTTELVDLDCSHSCSGRCSPAGSSPSKPGHTSSSSGLHSPGRYSPAHGRHFQRVAHVARLAAL.

Residues 1-7 (MLWQRLA) are Extracellular-facing. A helical; Signal-anchor for type III membrane protein membrane pass occupies residues 8-28 (VVEWAALAWELLGASVLFIAV). Residues 29-964 (RWLVRRLEKR…VAHVARLAAL (936 aa)) lie on the Cytoplasmic side of the membrane. The region spanning 71–115 (MARLKLLNPDDLRKEVMKAGLKCGPITSTTRFIFEKKLAQALLEQ) is the LEM domain. Residues Ser-266 and Ser-275 each carry the phosphoserine modification. An ANK repeat occupies 419-448 (GFDTPLHFACKFGNVDVVNVLSSHPLIVKN). Residues Ser-503, Ser-519, Ser-535, Ser-675, and Ser-916 each carry the phosphoserine modification. A compositionally biased stretch (polar residues) spans 666–688 (NQQNTVPSQSQPTTDKFQTSKSG). The tract at residues 666-726 (NQQNTVPSQS…PLNHRTADGR (61 aa)) is disordered. The disordered stretch occupies residues 920-949 (SPAGSSPSKPGHTSSSSGLHSPGRYSPAHG). The span at 923-937 (GSSPSKPGHTSSSSG) shows a compositional bias: low complexity. Ser-940 is modified (phosphoserine).

This sequence belongs to the ANKLE2 family. Interacts with BAF/BANF1. Interacts with protein phosphatase 2A (PP2A) components PPP2C (PPP2CA or PPP2CB) and PPP2R1A.

Its subcellular location is the endoplasmic reticulum membrane. Involved in mitotic nuclear envelope reassembly by promoting dephosphorylation of BAF/BANF1 during mitotic exit. Coordinates the control of BAF/BANF1 dephosphorylation by inhibiting VRK1 kinase and promoting dephosphorylation of BAF/BANF1 by protein phosphatase 2A (PP2A), thereby facilitating nuclear envelope assembly. May regulate nuclear localization of VRK1 in non-dividing cells. It is unclear whether it acts as a real PP2A regulatory subunit or whether it is involved in recruitment of the PP2A complex. Involved in brain development. This Mus musculus (Mouse) protein is Ankyrin repeat and LEM domain-containing protein 2 (Ankle2).